The chain runs to 262 residues: Glutamate 5-kinase (262 aa).

Lysine 14 lines the ATP pocket. The substrate site is built by serine 54, aspartate 141, and asparagine 153. Residues 173–174 (SD) and 214–220 (TGGMVTK) contribute to the ATP site.

The protein belongs to the glutamate 5-kinase family.

It localises to the cytoplasm. The enzyme catalyses L-glutamate + ATP = L-glutamyl 5-phosphate + ADP. It participates in amino-acid biosynthesis; L-proline biosynthesis; L-glutamate 5-semialdehyde from L-glutamate: step 1/2. Functionally, catalyzes the transfer of a phosphate group to glutamate to form L-glutamate 5-phosphate. The sequence is that of Glutamate 5-kinase from Symbiobacterium thermophilum (strain DSM 24528 / JCM 14929 / IAM 14863 / T).